Here is a 142-residue protein sequence, read N- to C-terminus: Immunoglobulin iota chain (142 aa).

An N-terminal signal peptide occupies residues 1-19 (MAWTSVLLMLLAYLTGCGP). The framework-1 stretch occupies residues 20–41 (QPMVHQPPLASSSLGATIRLSC). C41 and C115 are disulfide-bonded. Positions 42 to 56 (TLSNDHNIGIYSIYW) are complementarity-determining-1. The framework-2 stretch occupies residues 57 to 70 (YQQRPGHPPRFLLR). The segment at 71-81 (YFSHSDKHQGP) is complementarity-determining-2. The tract at residues 82-115 (DIPPRFSGSKDTTRNLGYLSISELQPEDEAVYYC) is framework-3.

It belongs to the immunoglobulin superfamily. In terms of assembly, interacts with IGLL1. Interacts with SYNV1/HRD1 (via N-terminus); this interaction leads to increased VPREB1A ubiquitination and degradation in pre-B cells, possibly through a lysosomal, not proteasomal, pathway. As to expression, only expressed by pre-B-cells.

The protein resides in the endoplasmic reticulum. In terms of biological role, associates with the Ig-mu chain to form a molecular complex that is expressed on the surface of pre-B-cells. This complex presumably regulates Ig gene rearrangements in the early steps of B-cell differentiation. This chain is Immunoglobulin iota chain, found in Mus musculus (Mouse).